The following is a 164-amino-acid chain: Putative pre-16S rRNA nuclease (164 aa).

It belongs to the YqgF nuclease family.

It is found in the cytoplasm. Could be a nuclease involved in processing of the 5'-end of pre-16S rRNA. The sequence is that of Putative pre-16S rRNA nuclease from Rhizobium etli (strain CIAT 652).